The sequence spans 221 residues: Oxaloacetate tautomerase FAHD1, mitochondrial (221 aa).

The N-terminal 24 residues, 1–24 (MAASRPLSRFWEWGKNIVCVGRNY), are a transit peptide targeting the mitochondrion. Oxalate is bound at residue R22. S37 carries the post-translational modification Phosphoserine. Mg(2+) is bound by residues E68, E70, and D99. Position 110 is an N6-acetyllysine (K110). K112 carries the post-translational modification N6-succinyllysine. Residues K120 and T189 each contribute to the oxalate site.

The protein belongs to the FAH family. Homodimer. It depends on Mg(2+) as a cofactor. Mn(2+) is required as a cofactor. As to expression, ubiquitous (at protein level).

Its subcellular location is the mitochondrion. The protein localises to the cytoplasm. The protein resides in the cytosol. The catalysed reaction is oxaloacetate = enol-oxaloacetate. It carries out the reaction oxaloacetate + H(+) = pyruvate + CO2. It catalyses the reaction a 3-acylpyruvate + H2O = a carboxylate + pyruvate + H(+). The enzyme catalyses acetylpyruvate + H2O = acetate + pyruvate + H(+). The catalysed reaction is 3-fumarylpyruvate + H2O = fumarate + pyruvate + H(+). Its activity is regulated as follows. Oxaloacetate decarboxylation is competitively inhibited by oxalate. Functionally, tautomerase that converts enol-oxaloacetate, a strong inhibitor of succinate dehydrogenase, to the physiological keto form of oxaloacetate. It is thereby required to maximize aerobic respiration efficiency by preventing succinate dehydrogenase inhibition. Also acts as a weak oxaloacetate decarboxylase (ODx), catalyzing the decarboxylation of oxaloacetate (OAA) to pyruvate and CO(2), and as such is likely a regulatory enzyme in the TCA cycle. Also displays acylpyruvase activity, being able to hydrolyze acetylpyruvate and fumarylpyruvate in vitro. Exhibits only a weak hydrolase activity on methylacetopyruvate and acetylacetone, and no activity toward acetoacetyl-CoA. In Homo sapiens (Human), this protein is Oxaloacetate tautomerase FAHD1, mitochondrial.